A 171-amino-acid chain; its full sequence is Lipoprotein signal peptidase (171 aa).

The next 3 helical transmembrane spans lie at 12–32, 67–87, and 93–113; these read WYWVAVLVFFADQLSKQWVLA, WQRWLFTIVAVGFSTLLTVWL, and SLLKLNLAYTLVIGGALGNLV. Active-site residues include D123 and D141. A helical transmembrane segment spans residues 137–157; sequence FNIADSAICIGAVLIIWDAFL.

Belongs to the peptidase A8 family.

The protein resides in the cell inner membrane. The enzyme catalyses Release of signal peptides from bacterial membrane prolipoproteins. Hydrolyzes -Xaa-Yaa-Zaa-|-(S,diacylglyceryl)Cys-, in which Xaa is hydrophobic (preferably Leu), and Yaa (Ala or Ser) and Zaa (Gly or Ala) have small, neutral side chains.. The protein operates within protein modification; lipoprotein biosynthesis (signal peptide cleavage). In terms of biological role, this protein specifically catalyzes the removal of signal peptides from prolipoproteins. This chain is Lipoprotein signal peptidase, found in Shewanella baltica (strain OS223).